A 91-amino-acid polypeptide reads, in one-letter code: Large ribosomal subunit protein eL34 (91 aa).

The disordered stretch occupies residues 48-71 (RGRPVEMRKLPKTKKRPERPYPHL).

This sequence belongs to the eukaryotic ribosomal protein eL34 family.

In Pyrococcus abyssi (strain GE5 / Orsay), this protein is Large ribosomal subunit protein eL34 (rpl34e).